The following is a 483-amino-acid chain: Probable cytochrome P450 517A4 (483 aa).

The chain crosses the membrane as a helical span at residues 1–21; that stretch reads MEIVNVLLFLIILFLVKDFVK. Cys429 serves as a coordination point for heme.

The protein belongs to the cytochrome P450 family. It depends on heme as a cofactor.

It localises to the membrane. This is Probable cytochrome P450 517A4 (cyp517A4) from Dictyostelium discoideum (Social amoeba).